The primary structure comprises 259 residues: Short-chain dehydrogenase reductase 5 (259 aa).

12–36 contacts NAD(+); it reads IITGGASGIGAEAARLFTDHGAKVV. Serine 144 is a binding site for substrate. Tyrosine 157 acts as the Proton acceptor in catalysis.

It belongs to the short-chain dehydrogenases/reductases (SDR) family.

This is Short-chain dehydrogenase reductase 5 (SDR5) from Arabidopsis thaliana (Mouse-ear cress).